Consider the following 230-residue polypeptide: Fibrillarin-like rRNA/tRNA 2'-O-methyltransferase (230 aa).

Residues 87–88 (TT), 105–106 (EF), 130–131 (DA), and 150–153 (DVAQ) contribute to the S-adenosyl-L-methionine site.

Belongs to the methyltransferase superfamily. Fibrillarin family. As to quaternary structure, interacts with nop5. Component of box C/D small ribonucleoprotein (sRNP) particles that contain rpl7ae, FlpA and nop5, plus a guide RNA.

Functionally, involved in pre-rRNA and tRNA processing. Utilizes the methyl donor S-adenosyl-L-methionine to catalyze the site-specific 2'-hydroxyl methylation of ribose moieties in rRNA and tRNA. Site specificity is provided by a guide RNA that base pairs with the substrate. Methylation occurs at a characteristic distance from the sequence involved in base pairing with the guide RNA. The sequence is that of Fibrillarin-like rRNA/tRNA 2'-O-methyltransferase from Methanococcus vannielii (strain ATCC 35089 / DSM 1224 / JCM 13029 / OCM 148 / SB).